The sequence spans 227 residues: Phosphatidylserine decarboxylase proenzyme (227 aa).

The active-site Schiff-base intermediate with substrate; via pyruvic acid is serine 169. Serine 169 is modified (pyruvic acid (Ser); by autocatalysis). A disordered region spans residues 197 to 227 (GRIPTPESGRSSSAEATAAPSASSARRSSAS). Positions 206–227 (RSSSAEATAAPSASSARRSSAS) are enriched in low complexity.

The protein belongs to the phosphatidylserine decarboxylase family. PSD-A subfamily. In terms of assembly, heterodimer of a large membrane-associated beta subunit and a small pyruvoyl-containing alpha subunit. Pyruvate serves as cofactor. Post-translationally, is synthesized initially as an inactive proenzyme. Formation of the active enzyme involves a self-maturation process in which the active site pyruvoyl group is generated from an internal serine residue via an autocatalytic post-translational modification. Two non-identical subunits are generated from the proenzyme in this reaction, and the pyruvate is formed at the N-terminus of the alpha chain, which is derived from the carboxyl end of the proenzyme. The post-translation cleavage follows an unusual pathway, termed non-hydrolytic serinolysis, in which the side chain hydroxyl group of the serine supplies its oxygen atom to form the C-terminus of the beta chain, while the remainder of the serine residue undergoes an oxidative deamination to produce ammonia and the pyruvoyl prosthetic group on the alpha chain.

It is found in the cell membrane. It carries out the reaction a 1,2-diacyl-sn-glycero-3-phospho-L-serine + H(+) = a 1,2-diacyl-sn-glycero-3-phosphoethanolamine + CO2. Its pathway is phospholipid metabolism; phosphatidylethanolamine biosynthesis; phosphatidylethanolamine from CDP-diacylglycerol: step 2/2. In terms of biological role, catalyzes the formation of phosphatidylethanolamine (PtdEtn) from phosphatidylserine (PtdSer). The polypeptide is Phosphatidylserine decarboxylase proenzyme (Salinibacter ruber (strain DSM 13855 / M31)).